Here is a 569-residue protein sequence, read N- to C-terminus: Urease subunit alpha (569 aa).

Residues 131–569 (GGMDAHIHYI…LPMAQRYFLF (439 aa)) enclose the Urease domain. Ni(2+) contacts are provided by His136, His138, and Lys218. The residue at position 218 (Lys218) is an N6-carboxylysine. Residue His220 coordinates substrate. Residues His247 and His273 each contribute to the Ni(2+) site. Residue His321 is the Proton donor of the active site. Asp361 contributes to the Ni(2+) binding site.

Belongs to the metallo-dependent hydrolases superfamily. Urease alpha subunit family. In terms of assembly, heterotrimer of UreA (gamma), UreB (beta) and UreC (alpha) subunits. Three heterotrimers associate to form the active enzyme. Ni cation serves as cofactor. Carboxylation allows a single lysine to coordinate two nickel ions.

It is found in the cytoplasm. It carries out the reaction urea + 2 H2O + H(+) = hydrogencarbonate + 2 NH4(+). Its pathway is nitrogen metabolism; urea degradation; CO(2) and NH(3) from urea (urease route): step 1/1. The polypeptide is Urease subunit alpha (Agrobacterium fabrum (strain C58 / ATCC 33970) (Agrobacterium tumefaciens (strain C58))).